A 122-amino-acid polypeptide reads, in one-letter code: Small ribosomal subunit protein uS13 (122 aa).

Residues 95–122 form a disordered region; the sequence is NLPVRGQRTHTNARTRKGKAKPIAGKKK.

Belongs to the universal ribosomal protein uS13 family. Part of the 30S ribosomal subunit. Forms a loose heterodimer with protein S19. Forms two bridges to the 50S subunit in the 70S ribosome.

Functionally, located at the top of the head of the 30S subunit, it contacts several helices of the 16S rRNA. In the 70S ribosome it contacts the 23S rRNA (bridge B1a) and protein L5 of the 50S subunit (bridge B1b), connecting the 2 subunits; these bridges are implicated in subunit movement. Contacts the tRNAs in the A and P-sites. The protein is Small ribosomal subunit protein uS13 of Methylobacterium nodulans (strain LMG 21967 / CNCM I-2342 / ORS 2060).